We begin with the raw amino-acid sequence, 756 residues long: Putative DNA ligase 052L (756 aa).

Lys103 functions as the N6-AMP-lysine intermediate in the catalytic mechanism. A compositionally biased stretch (low complexity) spans 610–620 (PSAAGSASPCR). The tract at residues 610–630 (PSAAGSASPCRPTKRRDDWFD) is disordered. Residues 648–742 (KKRPPMQGYV…LKRQRKCRAR (95 aa)) enclose the BRCT domain.

This sequence belongs to the NAD-dependent DNA ligase family.

It carries out the reaction NAD(+) + (deoxyribonucleotide)n-3'-hydroxyl + 5'-phospho-(deoxyribonucleotide)m = (deoxyribonucleotide)n+m + AMP + beta-nicotinamide D-nucleotide.. Its function is as follows. Catalyzes the formation of phosphodiester linkages between 5'-phosphoryl and 3'-hydroxyl groups in double-stranded DNA using NAD as a coenzyme and as the energy source for the reaction. The polypeptide is Putative DNA ligase 052L (Invertebrate iridescent virus 3 (IIV-3)).